We begin with the raw amino-acid sequence, 306 residues long: Porphobilinogen deaminase (306 aa).

S-(dipyrrolylmethanemethyl)cysteine is present on Cys239.

It belongs to the HMBS family. Monomer. Requires dipyrromethane as cofactor.

It catalyses the reaction 4 porphobilinogen + H2O = hydroxymethylbilane + 4 NH4(+). Its pathway is porphyrin-containing compound metabolism; protoporphyrin-IX biosynthesis; coproporphyrinogen-III from 5-aminolevulinate: step 2/4. In terms of biological role, tetrapolymerization of the monopyrrole PBG into the hydroxymethylbilane pre-uroporphyrinogen in several discrete steps. The protein is Porphobilinogen deaminase (hemC) of Helicobacter pylori (strain J99 / ATCC 700824) (Campylobacter pylori J99).